Consider the following 312-residue polypeptide: Olfactory receptor 8H3 (312 aa).

Over 1–26 (MMGRRNDTNVADFILTGLSDSEEVQM) the chain is Extracellular. N6 is a glycosylation site (N-linked (GlcNAc...) asparagine). A helical membrane pass occupies residues 27-47 (ALFMLFLLIYLITMLGNVGML). The Cytoplasmic segment spans residues 48–55 (LIIRLDLQ). Residues 56-76 (LHTPMYFFLTHLSFIDLSYST) traverse the membrane as a helical segment. Residues 77–99 (VVTPKTLANLLTSNYISFTGCFA) are Extracellular-facing. A disulfide bond links C97 and C189. Residues 100 to 120 (QMFCFVFLGTAECYLLSSMAY) traverse the membrane as a helical segment. Residues 121-139 (DRYAAICSPLHYTVIMPKR) lie on the Cytoplasmic side of the membrane. The chain crosses the membrane as a helical span at residues 140–160 (LCLALITGPYVIGFMDSFVNV). The Extracellular segment spans residues 161 to 197 (VSMSRLHFCDSNIIHHFFCDTSPILALSCTDTDNTEM). Residues 198–217 (LIFIIAGSTLMVSLITISAS) form a helical membrane-spanning segment. Over 218-237 (YVSILSTILKINSTSGKQKA) the chain is Cytoplasmic. A helical transmembrane segment spans residues 238–258 (FSTCVSHLLGVTIFYGTMIFT). Over 259–271 (YLKPRKSYSLGRD) the chain is Extracellular. The helical transmembrane segment at 272–292 (QVAPVFYTIVIPMLNPLIYSL) threads the bilayer. At 293–312 (RNREVKNALIRVMQRRQDSR) the chain is on the cytoplasmic side.

Belongs to the G-protein coupled receptor 1 family.

The protein localises to the cell membrane. Its function is as follows. Odorant receptor. The sequence is that of Olfactory receptor 8H3 (OR8H3) from Homo sapiens (Human).